The sequence spans 399 residues: Serine/threonine transporter SstT (399 aa).

Transmembrane regions (helical) follow at residues 8–28, 37–57, 77–97, 134–154, 178–198, 212–232, 284–304, 312–332, and 348–370; these read LSLV…AFLF, IFGE…VFVL, ILFL…IADL, PVVA…IILG, VIHL…AVTF, LLLV…PIMV, VIIP…ITVL, LGIS…SISA, and VACS…GMVI.

This sequence belongs to the dicarboxylate/amino acid:cation symporter (DAACS) (TC 2.A.23) family.

It localises to the cell inner membrane. It catalyses the reaction L-serine(in) + Na(+)(in) = L-serine(out) + Na(+)(out). The catalysed reaction is L-threonine(in) + Na(+)(in) = L-threonine(out) + Na(+)(out). Functionally, involved in the import of serine and threonine into the cell, with the concomitant import of sodium (symport system). This Acinetobacter baylyi (strain ATCC 33305 / BD413 / ADP1) protein is Serine/threonine transporter SstT.